Reading from the N-terminus, the 445-residue chain is NAD(P)H coenzyme A polysulfide/persulfide reductase (445 aa).

16 to 17 (AA) serves as a coordination point for FAD. CoA is bound at residue Arg-27. FAD contacts are provided by residues 38-39 (EA) and 45-47 (HAP). CoA is bound by residues 44-48 (SHAPC), 65-66 (YY), and Arg-75. Residue Cys-48 is the Redox-active of the active site. FAD-binding residues include Val-85, Asp-283, and Ala-301. The CoA site is built by Asn-305 and Lys-361. Tyr-425 is an FAD binding site. The CoA site is built by Trp-433 and Arg-441.

Belongs to the class-III pyridine nucleotide-disulfide oxidoreductase family. In terms of assembly, homodimer. Homotetramer. Requires FAD as cofactor.

The catalysed reaction is NADP(+) + 2 CoA = CoA-disulfide + NADPH + H(+). It catalyses the reaction NAD(+) + 2 CoA = CoA-disulfide + NADH + H(+). Catalyzes the NAD(P)H-dependent reduction of polysulfide, CoA-polysulfides, and CoA persulfide, as well as the reduction of a range of other small persulfides, including TNB and glutathione persulfides. The likely in vivo substrates are di-, poly-, and persulfide derivatives of coenzyme A, although polysulfide itself is also efficiently reduced. Shows coenzyme A disulfide reductase (CoADR) activity with both NADH and NADPH, with a preference for NADPH. May also play a role in the reduction of elemental sulfur. In Pyrococcus horikoshii (strain ATCC 700860 / DSM 12428 / JCM 9974 / NBRC 100139 / OT-3), this protein is NAD(P)H coenzyme A polysulfide/persulfide reductase.